The following is a 379-amino-acid chain: Succinyl-diaminopimelate desuccinylase (379 aa).

Histidine 70 is a binding site for Zn(2+). The active site involves aspartate 72. Aspartate 103 lines the Zn(2+) pocket. Glutamate 137 (proton acceptor) is an active-site residue. Zn(2+) is bound by residues glutamate 138, glutamate 166, and histidine 352.

The protein belongs to the peptidase M20A family. DapE subfamily. As to quaternary structure, homodimer. The cofactor is Zn(2+). Co(2+) serves as cofactor.

It catalyses the reaction N-succinyl-(2S,6S)-2,6-diaminopimelate + H2O = (2S,6S)-2,6-diaminopimelate + succinate. It participates in amino-acid biosynthesis; L-lysine biosynthesis via DAP pathway; LL-2,6-diaminopimelate from (S)-tetrahydrodipicolinate (succinylase route): step 3/3. Its function is as follows. Catalyzes the hydrolysis of N-succinyl-L,L-diaminopimelic acid (SDAP), forming succinate and LL-2,6-diaminopimelate (DAP), an intermediate involved in the bacterial biosynthesis of lysine and meso-diaminopimelic acid, an essential component of bacterial cell walls. In Burkholderia cenocepacia (strain ATCC BAA-245 / DSM 16553 / LMG 16656 / NCTC 13227 / J2315 / CF5610) (Burkholderia cepacia (strain J2315)), this protein is Succinyl-diaminopimelate desuccinylase.